Reading from the N-terminus, the 102-residue chain is Large ribosomal subunit protein bL21 (102 aa).

It belongs to the bacterial ribosomal protein bL21 family. In terms of assembly, part of the 50S ribosomal subunit. Contacts protein L20.

In terms of biological role, this protein binds to 23S rRNA in the presence of protein L20. This Phytoplasma australiense protein is Large ribosomal subunit protein bL21.